The primary structure comprises 212 residues: Methylthioribulose-1-phosphate dehydratase (212 aa).

Zn(2+) contacts are provided by His97 and His99.

It belongs to the aldolase class II family. MtnB subfamily. As to quaternary structure, homotetramer. It depends on Zn(2+) as a cofactor.

The enzyme catalyses 5-(methylsulfanyl)-D-ribulose 1-phosphate = 5-methylsulfanyl-2,3-dioxopentyl phosphate + H2O. The protein operates within amino-acid biosynthesis; L-methionine biosynthesis via salvage pathway; L-methionine from S-methyl-5-thio-alpha-D-ribose 1-phosphate: step 2/6. Functionally, catalyzes the dehydration of methylthioribulose-1-phosphate (MTRu-1-P) into 2,3-diketo-5-methylthiopentyl-1-phosphate (DK-MTP-1-P). The polypeptide is Methylthioribulose-1-phosphate dehydratase (Bacillus mycoides (strain KBAB4) (Bacillus weihenstephanensis)).